Reading from the N-terminus, the 253-residue chain is Transmembrane protein 69 (253 aa).

The next 5 membrane-spanning stretches (helical) occupy residues 104-124 (ALYLGLAGLIPFVSAPLLMNV), 137-157 (VAYGASILSFLGGVRWGFAIP), 165-185 (DWMNLTNSTVPALLAWLALLF), 192-212 (AAVLVIMGLGIALHYDLALLP), and 223-243 (AILTVVAVFSLVGSLINSSVY).

The protein localises to the membrane. The sequence is that of Transmembrane protein 69 (tmem69) from Xenopus tropicalis (Western clawed frog).